Reading from the N-terminus, the 440-residue chain is Tetratricopeptide repeat protein 5 (440 aa).

5 TPR repeats span residues 7 to 61, 68 to 98, 103 to 130, 136 to 174, and 179 to 216; these read EEVK…EEVV, AQVL…AVKL, VEAW…SGAL, KVSL…AVQM, and GRSW…AEKV. Positions 13–24 match the Nuclear export signal motif; that stretch reads LQKLQELVDQLY. S203 is subject to Phosphoserine; by ATM. Residue S221 is modified to Phosphoserine; by CHEK2. The stretch at 224 to 253 is one TPR 6 repeat; it reads PDLHLNRATLHKYEESYGEALEGFSRAAAL. Residues 285 to 287 are mediates interaction with 28S rRNA of ribosome-coding tubulin; the sequence is KTK.

Interacts with JMY and p300/EP300; the interaction occurs in the nucleus and augments the association between JMY and p300/EP300 in response to DNA damage. Forms a complex with HSF1 and p300/EP300; these interactions augment chromatin-bound HSF1 and p300/EP300 histone acetyltransferase activity, resulting in enhanced heat-shock-responsive transcription. Interacts with PRMT5; the interaction is DNA damage-dependent and promotes PRMT5 interaction with p53/TP53 and subsequent methylation. Interacts with JMY; the interaction occurs in the cytoplasm and results in the inhibition of JYM's nucleation activity. Interacts with ribosome-coding tubulin (via 60S subunit 28S rRNA and protein uL24/RPL26) and the N-terminal of nascent tubulin polypeptide (via alpha-tubulin MREC motif and beta-tubulin MREI motif); these interactions result in tubulin mRNA-targeted degradation. Interacts with ATP5F1B; the interaction occurs in the mitochondria and results in ATP production decrease. Interacts with p53/TP53; the interaction occurs in the mitochondria and results in increased apoptosis. In terms of processing, phosphorylation by ATM kinase induces nuclear accumulation while interfering with nuclear export, and phosphorylation by CHEK2 kinase enhances nuclear stability.

The protein resides in the nucleus. It localises to the cytoplasm. Its subcellular location is the cytoplasmic vesicle. It is found in the mitochondrion matrix. In terms of biological role, cofactor involved in the regulation of various cellular mechanisms such as actin regulation, autophagy, chromatin regulation and DNA repair. In non-stress conditions, interacts with cofactor JMY in the cytoplasm which prevents JMY's actin nucleation activity and ability to activate the Arp2/3 complex. Acts as a negative regulator of nutrient stress-induced autophagy by preventing JMY's interaction with MAP1LC3B, thereby preventing autophagosome formation. Involves in tubulin autoregulation by promoting its degradation in response to excess soluble tubulin. To do so, associates with the active ribosome near the ribosome exit tunnel and with nascent tubulin polypeptides early during their translation, triggering tubulin mRNA-targeted degradation. Following DNA damage, phosphorylated by DNA damage responsive protein kinases ATM and CHEK2, leading to its nuclear accumulation and stability. Nuclear TTC5/STRAP promotes the assembly of a stress-responsive p53/TP53 coactivator complex, which includes the coactivators JMY and p300, thereby increasing p53/TP53-dependent transcription and apoptosis. Also recruits arginine methyltransferase PRMT5 to p53/TP53 when DNA is damaged, allowing PRMT5 to methylate p53/TP53. In DNA stress conditions, also prevents p53/TP53 degradation by E3 ubiquitin ligase MDM2. Upon heat-shock stress, forms a chromatin-associated complex with heat-shock factor 1 HSF1 and p300/EP300 to stimulate heat-shock-responsive transcription, thereby increasing cell survival. Mitochondrial TTC5/STRAP interacts with ATP synthase subunit beta ATP5F1B which decreased ATP synthase activity and lowers mitochondrial ATP production, thereby regulating cellular respiration and mitochondrial-dependent apoptosis. Mitochondrial TTC5/STRAP also regulates p53/TP53-mediated apoptosis. This chain is Tetratricopeptide repeat protein 5, found in Homo sapiens (Human).